A 155-amino-acid chain; its full sequence is MSRRGTAEEKTAKSDPIYRNRLVNMLVNRILKHGKKSLAYQIIYRAVKKIQQKTETNPLSVLRQAIRGVTPDIAVKARRVGGSTHQVPIEIGSTQGKALAIRWLLGASRKRPGRNMAFKLSSELVDAAKGSGDAIRKKEETHKMAXANRAFAHFR.

Belongs to the universal ribosomal protein uS7 family. As to quaternary structure, part of the 30S ribosomal subunit.

It localises to the plastid. The protein resides in the chloroplast. In terms of biological role, one of the primary rRNA binding proteins, it binds directly to 16S rRNA where it nucleates assembly of the head domain of the 30S subunit. The protein is Small ribosomal subunit protein uS7c (rps7) of Aristolochia macrophylla (Dutchman's pipe vine).